A 329-amino-acid polypeptide reads, in one-letter code: Phosphate acyltransferase (329 aa).

This sequence belongs to the PlsX family. In terms of assembly, homodimer. Probably interacts with PlsY.

It localises to the cytoplasm. It catalyses the reaction a fatty acyl-[ACP] + phosphate = an acyl phosphate + holo-[ACP]. The protein operates within lipid metabolism; phospholipid metabolism. In terms of biological role, catalyzes the reversible formation of acyl-phosphate (acyl-PO(4)) from acyl-[acyl-carrier-protein] (acyl-ACP). This enzyme utilizes acyl-ACP as fatty acyl donor, but not acyl-CoA. The protein is Phosphate acyltransferase of Shouchella clausii (strain KSM-K16) (Alkalihalobacillus clausii).